We begin with the raw amino-acid sequence, 338 residues long: Glycerol-3-phosphate dehydrogenase [NAD(P)+] (338 aa).

NADPH-binding residues include S13, W14, and K108. 3 residues coordinate sn-glycerol 3-phosphate: K108, G139, and S141. Residue A143 participates in NADPH binding. Residues K194, D247, S257, R258, and N259 each coordinate sn-glycerol 3-phosphate. K194 (proton acceptor) is an active-site residue. Position 258 (R258) interacts with NADPH. NADPH-binding residues include V282 and E284.

Belongs to the NAD-dependent glycerol-3-phosphate dehydrogenase family.

Its subcellular location is the cytoplasm. It catalyses the reaction sn-glycerol 3-phosphate + NAD(+) = dihydroxyacetone phosphate + NADH + H(+). The enzyme catalyses sn-glycerol 3-phosphate + NADP(+) = dihydroxyacetone phosphate + NADPH + H(+). It participates in membrane lipid metabolism; glycerophospholipid metabolism. Functionally, catalyzes the reduction of the glycolytic intermediate dihydroxyacetone phosphate (DHAP) to sn-glycerol 3-phosphate (G3P), the key precursor for phospholipid synthesis. In Streptococcus pneumoniae (strain JJA), this protein is Glycerol-3-phosphate dehydrogenase [NAD(P)+].